The following is a 116-amino-acid chain: NADH-ubiquinone oxidoreductase chain 3 (116 aa).

3 helical membrane passes run 3 to 23 (LIMTILTITVALSLILATVSF), 56 to 76 (FFLVAILFLLFDLEIALLLPL), and 87 to 107 (GTFFWATTVLILLTLGLIYEW).

Belongs to the complex I subunit 3 family.

The protein resides in the mitochondrion membrane. It catalyses the reaction a ubiquinone + NADH + 5 H(+)(in) = a ubiquinol + NAD(+) + 4 H(+)(out). Core subunit of the mitochondrial membrane respiratory chain NADH dehydrogenase (Complex I) that is believed to belong to the minimal assembly required for catalysis. Complex I functions in the transfer of electrons from NADH to the respiratory chain. The immediate electron acceptor for the enzyme is believed to be ubiquinone. This Cyprinus carpio (Common carp) protein is NADH-ubiquinone oxidoreductase chain 3 (MT-ND3).